Reading from the N-terminus, the 687-residue chain is Histone deacetylase clr3 (687 aa).

The segment at lysine 55–glycine 385 is histone deacetylase. The active site involves histidine 195.

The protein belongs to the histone deacetylase family. HD type 2 subfamily. In terms of assembly, interacts with ccq1, clr1, clr2 and mit1.

It localises to the nucleus. Its subcellular location is the chromosome. It is found in the centromere. The protein localises to the telomere. It catalyses the reaction N(6)-acetyl-L-lysyl-[histone] + H2O = L-lysyl-[histone] + acetate. Responsible for the deacetylation of lysine residues on the N-terminal part of the core histones (H2A, H2B, H3 and H4). Histone deacetylation gives a tag for epigenetic repression and plays an important role in transcriptional regulation, cell cycle progression and developmental events. Histone deacetylases act via the formation of large multiprotein complexes. Required for proper positioning of nucleosomes at heterochromatic loci and for transcriptional gene silencing (TGS) function of the Snf2/Hdac-containing repressor complex (SHREC). This chain is Histone deacetylase clr3 (clr3), found in Schizosaccharomyces pombe (strain 972 / ATCC 24843) (Fission yeast).